The sequence spans 877 residues: Alanine--tRNA ligase (877 aa).

4 residues coordinate Zn(2+): His564, His568, Cys666, and His670.

It belongs to the class-II aminoacyl-tRNA synthetase family. Requires Zn(2+) as cofactor.

It localises to the cytoplasm. The catalysed reaction is tRNA(Ala) + L-alanine + ATP = L-alanyl-tRNA(Ala) + AMP + diphosphate. Functionally, catalyzes the attachment of alanine to tRNA(Ala) in a two-step reaction: alanine is first activated by ATP to form Ala-AMP and then transferred to the acceptor end of tRNA(Ala). Also edits incorrectly charged Ser-tRNA(Ala) and Gly-tRNA(Ala) via its editing domain. This is Alanine--tRNA ligase from Pelotomaculum thermopropionicum (strain DSM 13744 / JCM 10971 / SI).